The sequence spans 179 residues: MSRIGKKPIPLPNKVTIDIKGQHIAVKGPKGSLELDLPSEVTVNQEGETVEVQRVDDSRTARERHGLFRTLVANMIQGVSQGFEKRLNIQGVGYRAQAQGSKLTLNVGYSKPVEMTMPQGINVAVENNTQVVVSGIDKEIVGNIAAKIRGVRPPEPYKGKGIRYQDEYVRRKAGKAGKK.

It belongs to the universal ribosomal protein uL6 family. In terms of assembly, part of the 50S ribosomal subunit.

Its function is as follows. This protein binds to the 23S rRNA, and is important in its secondary structure. It is located near the subunit interface in the base of the L7/L12 stalk, and near the tRNA binding site of the peptidyltransferase center. This is Large ribosomal subunit protein uL6 from Crocosphaera subtropica (strain ATCC 51142 / BH68) (Cyanothece sp. (strain ATCC 51142)).